We begin with the raw amino-acid sequence, 496 residues long: Glutamyl-tRNA(Gln) amidotransferase subunit A (496 aa).

Residues K75 and S150 each act as charge relay system in the active site. Catalysis depends on S174, which acts as the Acyl-ester intermediate.

It belongs to the amidase family. GatA subfamily. In terms of assembly, heterotrimer of A, B and C subunits.

It catalyses the reaction L-glutamyl-tRNA(Gln) + L-glutamine + ATP + H2O = L-glutaminyl-tRNA(Gln) + L-glutamate + ADP + phosphate + H(+). Allows the formation of correctly charged Gln-tRNA(Gln) through the transamidation of misacylated Glu-tRNA(Gln) in organisms which lack glutaminyl-tRNA synthetase. The reaction takes place in the presence of glutamine and ATP through an activated gamma-phospho-Glu-tRNA(Gln). This chain is Glutamyl-tRNA(Gln) amidotransferase subunit A, found in Burkholderia ambifaria (strain ATCC BAA-244 / DSM 16087 / CCUG 44356 / LMG 19182 / AMMD) (Burkholderia cepacia (strain AMMD)).